The following is a 394-amino-acid chain: ATP-dependent RNA helicase fal1 (394 aa).

The Q motif motif lies at 21 to 49 (SSFEEMNLKEDLLRGIYAYGYETPSAVQS). In terms of domain architecture, Helicase ATP-binding spans 52–222 (IIQICKGRDV…NKFTTNPVRI (171 aa)). Residue 65 to 72 (AQSGTGKT) participates in ATP binding. The residue at position 67 (serine 67) is a Phosphoserine. A DEAD box motif is present at residues 170-173 (DEAD). One can recognise a Helicase C-terminal domain in the interval 233–394 (GLKQYFIAVE…EMPMNIGDMV (162 aa)).

This sequence belongs to the DEAD box helicase family. DDX48/FAL1 subfamily.

It is found in the nucleus. Its subcellular location is the nucleolus. The catalysed reaction is ATP + H2O = ADP + phosphate + H(+). Functionally, ATP-dependent RNA helicase involved in 40S ribosomal subunit biogenesis. Required for the processing and cleavage of 35S pre-rRNA at sites A0, A1, and A2, leading to mature 18S rRNA. This Schizosaccharomyces pombe (strain 972 / ATCC 24843) (Fission yeast) protein is ATP-dependent RNA helicase fal1 (tif412).